The chain runs to 397 residues: RNA pseudouridine synthase 5 (397 aa).

Residues 64-114 (APLPGWIKRIRDGQITVDGEVATDPDMILREGSKLVYHRLPWQEPFAPHLL) form the S4 RNA-binding domain.

The protein belongs to the pseudouridine synthase RluA family.

It carries out the reaction a uridine in RNA = a pseudouridine in RNA. In Oryza sativa subsp. japonica (Rice), this protein is RNA pseudouridine synthase 5.